A 284-amino-acid polypeptide reads, in one-letter code: uncharacterized protein (284 aa).

The helical transmembrane segment at 12–32 (ILFILFVVAFCVYLVPRVAIN) threads the bilayer.

The protein belongs to the serine esterase family.

The protein resides in the membrane. This is an uncharacterized protein from Escherichia coli (strain K12).